We begin with the raw amino-acid sequence, 288 residues long: Killer cell lectin-like receptor 2 (288 aa).

The Cytoplasmic segment spans residues 1–45 (MSEQEVTYTTLRFHKSSGLQNPVRPEETQRPRDVGHRECSVPWKF). Residues 46-66 (IVIVLGILCFLLLLTVAVLVI) traverse the membrane as a helical; Signal-anchor for type II membrane protein segment. At 67–288 (HIFRDGQEKH…SALQRDEDES (222 aa)) the chain is on the extracellular side. Residues N94, N105, and N114 are each glycosylated (N-linked (GlcNAc...) asparagine). Positions 144–263 (QVEGYWFCCG…THGCICEKRL (120 aa)) constitute a C-type lectin domain. 4 cysteine pairs are disulfide-bonded: C151-C156, C169-C257, C173-C259, and C238-C251. Residue N177 is glycosylated (N-linked (GlcNAc...) asparagine).

Homodimer; disulfide-linked.

The protein resides in the membrane. Its function is as follows. Receptor on natural killer (NK) cells for class I MHC. The protein is Killer cell lectin-like receptor 2 (Klra2) of Mus musculus (Mouse).